A 253-amino-acid chain; its full sequence is uncharacterized protein (253 aa).

The signal sequence occupies residues 1 to 19; that stretch reads MHYLKKVTIYISLLILVSG. Residue C20 is the site of N-palmitoyl cysteine attachment. The S-diacylglycerol cysteine moiety is linked to residue C20.

The protein belongs to the staphylococcal tandem lipoprotein family.

It localises to the cell membrane. This is an uncharacterized protein from Staphylococcus epidermidis (strain ATCC 35984 / DSM 28319 / BCRC 17069 / CCUG 31568 / BM 3577 / RP62A).